The sequence spans 942 residues: Probable serine/threonine-protein kinase DDB_G0279719 (942 aa).

In terms of domain architecture, Protein kinase spans 4–617 (YEVVKLIGVG…IDLILQNKLF (614 aa)). ATP contacts are provided by residues 10 to 18 (IGVGGEAKA) and Lys33. Disordered stretches follow at residues 109–170 (NNNQ…INNN), 247–303 (SFSN…NGNT), 352–371 (QPPQSTSTSKTDSSPTGADV), and 408–445 (NDPSSHSQPQHQQLHSSPQQLPQSPRLKPNIESSLNIN). Over residues 258-272 (NSNDSNLHQSSSNSS) the composition is skewed to low complexity. A compositionally biased stretch (polar residues) spans 288–303 (SPGTSTPYQKGSNGNT). Low complexity-rich tracts occupy residues 353–367 (PPQSTSTSKTDSSPT) and 410–432 (PSSHSQPQHQQLHSSPQQLPQSP). The active-site Proton acceptor is the Asp487. The segment at 642 to 686 (TNSKSNSSNNLNNSNSNNDIINNNNNNNSSNNINNNNIVNLNNSY) is disordered. A coiled-coil region spans residues 675 to 703 (NNNNIVNLNNSYNNKQDKCEQRNKSLNQN).

Belongs to the protein kinase superfamily. Ser/Thr protein kinase family.

The enzyme catalyses L-seryl-[protein] + ATP = O-phospho-L-seryl-[protein] + ADP + H(+). It catalyses the reaction L-threonyl-[protein] + ATP = O-phospho-L-threonyl-[protein] + ADP + H(+). The polypeptide is Probable serine/threonine-protein kinase DDB_G0279719 (Dictyostelium discoideum (Social amoeba)).